We begin with the raw amino-acid sequence, 165 residues long: Transcription antitermination protein NusB (165 aa).

Residues 1–20 form a disordered region; sequence MSDVENGGEPRQPSVKPANQ.

This sequence belongs to the NusB family.

Involved in transcription antitermination. Required for transcription of ribosomal RNA (rRNA) genes. Binds specifically to the boxA antiterminator sequence of the ribosomal RNA (rrn) operons. The chain is Transcription antitermination protein NusB from Agrobacterium fabrum (strain C58 / ATCC 33970) (Agrobacterium tumefaciens (strain C58)).